The following is a 282-amino-acid chain: Caspase-3 (282 aa).

Active-site residues include His131 and Cys174.

It belongs to the peptidase C14A family. As to quaternary structure, heterotetramer that consists of two anti-parallel arranged heterodimers, each one formed by a 17 kDa (p17) and a 12 kDa (p12) subunit.

The protein localises to the cytoplasm. The catalysed reaction is Strict requirement for an Asp residue at positions P1 and P4. It has a preferred cleavage sequence of Asp-Xaa-Xaa-Asp-|- with a hydrophobic amino-acid residue at P2 and a hydrophilic amino-acid residue at P3, although Val or Ala are also accepted at this position.. Functionally, important mediator of apoptosis. At the onset of apoptosis, it proteolytically cleaves poly(ADP-ribose) polymerase PARP1 at a '216-Asp-|-Gly-217' bond. This chain is Caspase-3 (casp3), found in Xenopus laevis (African clawed frog).